The primary structure comprises 128 residues: Aspartate 1-decarboxylase (128 aa).

The active-site Schiff-base intermediate with substrate; via pyruvic acid is the S25. A Pyruvic acid (Ser) modification is found at S25. T57 contacts substrate. The Proton donor role is filled by Y58. 73 to 75 (GSA) serves as a coordination point for substrate.

Belongs to the PanD family. Heterooctamer of four alpha and four beta subunits. Pyruvate is required as a cofactor. In terms of processing, is synthesized initially as an inactive proenzyme, which is activated by self-cleavage at a specific serine bond to produce a beta-subunit with a hydroxyl group at its C-terminus and an alpha-subunit with a pyruvoyl group at its N-terminus.

It localises to the cytoplasm. It catalyses the reaction L-aspartate + H(+) = beta-alanine + CO2. The protein operates within cofactor biosynthesis; (R)-pantothenate biosynthesis; beta-alanine from L-aspartate: step 1/1. In terms of biological role, catalyzes the pyruvoyl-dependent decarboxylation of aspartate to produce beta-alanine. The chain is Aspartate 1-decarboxylase from Paraburkholderia xenovorans (strain LB400).